Here is a 375-residue protein sequence, read N- to C-terminus: MSDQQTCVIDNGSGVVKAGFAGEDAPRAVFPSIVGRPKNVSALIGVDSASEYLGDEAQQKRGVLKIFYPIEHGIVKDWDDMEKIWNHTFYVELRVQPDEHPILLTEAPLNPKTNREKMTQIMFETFNVPALYVAIQAVLSLYSAGRTTGIVCDAGDGVTHTVPIYEGFSIPHAVSRIQLAGRDLTTFLAKLLTERGYNFTSSAELEIVRDIKEKLCFVALDYESALKQSHDSSQFEKNYELPDGKVITIGSERFRCPEYLFKPLEMNGRELDSIQDLTYKSIQECDVDVRRDLYQNIILSGGTTMYEGIGERLLKEIENRAPKSINVKVIASPDRRFAVWRGGSTLTSLSTFASMWITKEDYDENGASIVHRKCI.

It belongs to the actin family.

The protein resides in the cytoplasm. It is found in the cytoskeleton. It carries out the reaction ATP + H2O = ADP + phosphate + H(+). Functionally, actins are highly conserved proteins that are involved in various types of cell motility and are ubiquitously expressed in all eukaryotic cells. The chain is Actin, cytoplasmic from Oxytricha trifallax (Sterkiella histriomuscorum).